Consider the following 797-residue polypeptide: Cleavage factor two protein 2 (797 aa).

Disordered stretches follow at residues 519-557 (ENDS…EVPS) and 677-703 (PSEE…KKEE). The segment covering 684–703 (KEEVEKKDGDKERNEEKKEE) has biased composition (basic and acidic residues).

In terms of assembly, component of the cleavage and polyadenylation factor (CPF) complex, which is composed of cft1, cft2, ysh1, pta1, swd2, pfs2, dis2, yth1, ssu72, and fip1.

The protein localises to the nucleus. RNA-binding component of the cleavage and polyadenylation factor (CPF) complex, which plays a key role in polyadenylation-dependent pre-mRNA 3'-end formation and cooperates with cleavage factors including the CFIA complex and NAB4/CFIB. May be involved in poly(A)-site recognition. May be involved in the association of the CPF, CPFIA and RNA polymerase II complexes. This chain is Cleavage factor two protein 2 (cft2), found in Schizosaccharomyces pombe (strain 972 / ATCC 24843) (Fission yeast).